The sequence spans 55 residues: Large ribosomal subunit protein bL33 (55 aa).

This sequence belongs to the bacterial ribosomal protein bL33 family.

This Caulobacter sp. (strain K31) protein is Large ribosomal subunit protein bL33.